The following is a 257-amino-acid chain: Protein YIPF5 (257 aa).

Topologically, residues 1 to 124 (MSGFDNLNSG…RAADGSIMNE (124 aa)) are cytoplasmic. The tract at residues 75 to 106 (PTTPQPFYGDSFEEEPPLLEELGINFDHIWQK) is interaction with Sec23. A helical membrane pass occupies residues 125 to 145 (TDLAGPVVFCLAFGATLLLAG). Lysine 146 is a topological domain (lumenal). A helical transmembrane segment spans residues 147–167 (IQFGYVYGISAIGCLGMFCLL). Over 168 to 173 (NLMSMT) the chain is Cytoplasmic. A helical membrane pass occupies residues 174–194 (GVSFGCVASVLGYCLLPMILL). The Lumenal portion of the chain corresponds to 195-196 (SS). A helical transmembrane segment spans residues 197 to 217 (FAVVFSLQGMVGILLTATIIG). Topologically, residues 218–236 (WCSFSASKIFISALAMDGQ) are cytoplasmic. Residues 237 to 257 (QLLVAYPCALLYGVFALISVF) form a helical membrane-spanning segment.

This sequence belongs to the YIP1 family. In terms of assembly, interacts with the COPII coat components Sec23 (SEC23A and/or SEC23B) and Sec24 (SEC24A and/or SEC24B). Interacts with YIF1A. May interact with RAB1A. Interacts with YIPF3 and YIPF4. Ubiquitously expressed.

It is found in the golgi apparatus. The protein resides in the cis-Golgi network membrane. It localises to the cytoplasmic vesicle. The protein localises to the COPII-coated vesicle. Its subcellular location is the endoplasmic reticulum membrane. Functionally, plays a role in transport between endoplasmic reticulum and Golgi. In pancreatic beta cells, required to transport proinsulin from endoplasmic reticulum into the Golgi. The sequence is that of Protein YIPF5 from Mus musculus (Mouse).